A 95-amino-acid polypeptide reads, in one-letter code: MRTLALLAAILLVTLQAQAELHSGMADDGVDQQQPRAQDLDVAVYIKQDETSPLEVLGAKAGVFCTCRGFLCGSGERASGSCTINGVRHTLCCRR.

Residues Met1–Ala19 form the signal peptide. Residues Glu20 to Gly62 constitute a propeptide that is removed on maturation. Intrachain disulfides connect Cys65-Cys93, Cys67-Cys82, and Cys72-Cys92.

Belongs to the alpha-defensin family.

It localises to the secreted. Microbicidal activity. This chain is Neutrophil antibiotic peptide NP-5, found in Oryctolagus cuniculus (Rabbit).